A 202-amino-acid chain; its full sequence is MLELLKVSITGDLSSGKTEASRVFQDLGAYVISADKVSHSFLVPHSHIGRRVIDLLGPEVVVDNAFDRKVIAEKVFDNLVLLQALEAILHPEVRRIIEEQYYQVAKERKHPLFIAEVPLLYEIHYAKWFDRVILITADENIRRERFTKKTNCSDLNFYQRCARFSSNEEKKMHADIVIENNGTKEELRHKVEEYFYALKGAL.

The DPCK domain occupies 6-202 (KVSITGDLSS…EYFYALKGAL (197 aa)). 14-19 (SSGKTE) contacts ATP.

The protein belongs to the CoaE family.

The protein localises to the cytoplasm. It catalyses the reaction 3'-dephospho-CoA + ATP = ADP + CoA + H(+). It functions in the pathway cofactor biosynthesis; coenzyme A biosynthesis; CoA from (R)-pantothenate: step 5/5. Its function is as follows. Catalyzes the phosphorylation of the 3'-hydroxyl group of dephosphocoenzyme A to form coenzyme A. This is Dephospho-CoA kinase from Chlamydia caviae (strain ATCC VR-813 / DSM 19441 / 03DC25 / GPIC) (Chlamydophila caviae).